Here is a 166-residue protein sequence, read N- to C-terminus: MLLEEVHAGDRLSGAAARGDVQEVRRLLHSELVHPDVLNRFGKTALQVMMFGSPTIALELLKQGASPNVQDASGTTPAHDAARTGFLDTLKVLVEHGADVNAPDGTGALPIHLAVREGHTSVVSFLATESDLHHRDATGLTPLELARGRGAQELMDILQRHTVAPL.

Met-1 is subject to N-acetylmethionine. ANK repeat units lie at residues 41–69 (FGKTALQVMMFGSPTIALELLKQGASPNV), 73–102 (SGTTPAHDAARTGFLDTLKVLVEHGADVNA), 106–135 (TGALPIHLAVREGHTSVVSFLATESDLHHR), and 138–166 (TGLTPLELARGRGAQELMDILQRHTVAPL).

Belongs to the CDKN2 cyclin-dependent kinase inhibitor family. In terms of assembly, interacts with CDK6.

The protein resides in the nucleus. It localises to the cytoplasm. Functionally, interacts strongly with CDK4 and CDK6 and inhibits them. The protein is Cyclin-dependent kinase 4 inhibitor D (CDKN2D) of Bos taurus (Bovine).